A 569-amino-acid chain; its full sequence is Vacuolar protein sorting-associated protein 53 B (569 aa).

Coiled-coil stretches lie at residues 53 to 90, 125 to 145, and 295 to 316; these read TRAK…VQDI, QVMT…AINE, and KEKS…FERE.

The protein belongs to the VPS53 family. Component of the Golgi-associated retrograde protein (GARP) complex.

Its subcellular location is the cytoplasm. The protein localises to the golgi apparatus. It localises to the trans-Golgi network membrane. The protein resides in the endosome membrane. Functionally, involved in retrograde transport from early and late endosomes to late Golgi, leading to the membrane fusion between late Golgi and endosomal vesicles. The chain is Vacuolar protein sorting-associated protein 53 B from Arabidopsis thaliana (Mouse-ear cress).